Here is a 272-residue protein sequence, read N- to C-terminus: Flt3 receptor-interacting lectin (272 aa).

The signal sequence occupies residues 1-8 (MFPSKVKS). Residues aspartate 94 and glycine 112 each coordinate alpha-D-mannopyranose. N-linked (GlcNAc...) asparagine glycosylation is found at asparagine 125 and asparagine 131. Alpha-D-mannopyranose-binding positions include asparagine 152 and 237 to 238 (QD).

It belongs to the leguminous lectin family. As to quaternary structure, dimer (alpha/beta)2. Tetramer (alpha/beta)4. Glycosylated at Asn-125 by either a paucimannose type N-glycan (alpha-4) or a single N-acetylglucosamine (alpha-3). Glycosylated at Asn-131 by a paucimannose type N-glycan (alpha-2, alpha-3 and alpha-4). In alpha-2, Asn-125 is deamidated to an Asp, possibly due to the action of intrinsic peptide N-glycosidase (PGNase).

The protein resides in the protein storage vacuole lumen. Mannose-binding lectin. Accommodates most effectively a non-reducing terminal alpha-d-mannosyl unit. Strongly precipitates murine IgM but not IgG. The sequence is that of Flt3 receptor-interacting lectin from Lablab purpureus (Hyacinth bean).